The primary structure comprises 360 residues: Glutamate 5-kinase (360 aa).

Lys7 serves as a coordination point for ATP. 3 residues coordinate substrate: Ser47, Asp134, and Asn146. ATP contacts are provided by residues 166–167 (TD) and 210–216 (TGGISTK). One can recognise a PUA domain in the interval 275-356 (VGKITLDDGA…SSIIVVHRDV (82 aa)).

The protein belongs to the glutamate 5-kinase family.

The protein resides in the cytoplasm. The enzyme catalyses L-glutamate + ATP = L-glutamyl 5-phosphate + ADP. It functions in the pathway amino-acid biosynthesis; L-proline biosynthesis; L-glutamate 5-semialdehyde from L-glutamate: step 1/2. Catalyzes the transfer of a phosphate group to glutamate to form L-glutamate 5-phosphate. The polypeptide is Glutamate 5-kinase (Prochlorococcus marinus (strain AS9601)).